The primary structure comprises 503 residues: Aspartyl/glutamyl-tRNA(Asn/Gln) amidotransferase subunit B (503 aa).

The protein belongs to the GatB/GatE family. GatB subfamily. As to quaternary structure, heterotrimer of A, B and C subunits.

It carries out the reaction L-glutamyl-tRNA(Gln) + L-glutamine + ATP + H2O = L-glutaminyl-tRNA(Gln) + L-glutamate + ADP + phosphate + H(+). It catalyses the reaction L-aspartyl-tRNA(Asn) + L-glutamine + ATP + H2O = L-asparaginyl-tRNA(Asn) + L-glutamate + ADP + phosphate + 2 H(+). Functionally, allows the formation of correctly charged Asn-tRNA(Asn) or Gln-tRNA(Gln) through the transamidation of misacylated Asp-tRNA(Asn) or Glu-tRNA(Gln) in organisms which lack either or both of asparaginyl-tRNA or glutaminyl-tRNA synthetases. The reaction takes place in the presence of glutamine and ATP through an activated phospho-Asp-tRNA(Asn) or phospho-Glu-tRNA(Gln). This is Aspartyl/glutamyl-tRNA(Asn/Gln) amidotransferase subunit B from Cereibacter sphaeroides (strain ATCC 17023 / DSM 158 / JCM 6121 / CCUG 31486 / LMG 2827 / NBRC 12203 / NCIMB 8253 / ATH 2.4.1.) (Rhodobacter sphaeroides).